The chain runs to 490 residues: Cysteine--tRNA ligase (490 aa).

Cys-31 provides a ligand contact to Zn(2+). Residues 33-43 (PTVYGDAHLGH) carry the 'HIGH' region motif. Zn(2+) contacts are provided by Cys-226, His-251, and Glu-255. Positions 283-287 (KMGKS) match the 'KMSKS' region motif. Residue Lys-286 participates in ATP binding.

It belongs to the class-I aminoacyl-tRNA synthetase family. In terms of assembly, monomer. Zn(2+) is required as a cofactor.

It localises to the cytoplasm. It catalyses the reaction tRNA(Cys) + L-cysteine + ATP = L-cysteinyl-tRNA(Cys) + AMP + diphosphate. The chain is Cysteine--tRNA ligase from Porphyromonas gingivalis (strain ATCC BAA-308 / W83).